The primary structure comprises 240 residues: Putative S-adenosylmethionine-dependent methyltransferase RcsF (240 aa).

Positions Ile5–Asp142 constitute a TsaA-like domain. S-adenosyl-L-methionine is bound by residues Pro22–Gln24, His63–Gln64, Arg91, and Leu122–Thr125.

Belongs to the tRNA methyltransferase O family.

The chain is Putative S-adenosylmethionine-dependent methyltransferase RcsF (rcsF) from Pseudomonas aeruginosa.